Reading from the N-terminus, the 200-residue chain is ATP-dependent Clp protease proteolytic subunit (200 aa).

The active-site Nucleophile is Ser-97. Residue His-122 is part of the active site.

This sequence belongs to the peptidase S14 family. In terms of assembly, fourteen ClpP subunits assemble into 2 heptameric rings which stack back to back to give a disk-like structure with a central cavity, resembling the structure of eukaryotic proteasomes.

It localises to the cytoplasm. The enzyme catalyses Hydrolysis of proteins to small peptides in the presence of ATP and magnesium. alpha-casein is the usual test substrate. In the absence of ATP, only oligopeptides shorter than five residues are hydrolyzed (such as succinyl-Leu-Tyr-|-NHMec, and Leu-Tyr-Leu-|-Tyr-Trp, in which cleavage of the -Tyr-|-Leu- and -Tyr-|-Trp bonds also occurs).. Functionally, cleaves peptides in various proteins in a process that requires ATP hydrolysis. Has a chymotrypsin-like activity. Plays a major role in the degradation of misfolded proteins. The sequence is that of ATP-dependent Clp protease proteolytic subunit from Oleidesulfovibrio alaskensis (strain ATCC BAA-1058 / DSM 17464 / G20) (Desulfovibrio alaskensis).